A 311-amino-acid chain; its full sequence is 4-diphosphocytidyl-2-C-methyl-D-erythritol kinase (311 aa).

Lys-16 is a catalytic residue. Pro-100–Ser-110 provides a ligand contact to ATP. The active site involves Asp-142.

Belongs to the GHMP kinase family. IspE subfamily.

It carries out the reaction 4-CDP-2-C-methyl-D-erythritol + ATP = 4-CDP-2-C-methyl-D-erythritol 2-phosphate + ADP + H(+). It participates in isoprenoid biosynthesis; isopentenyl diphosphate biosynthesis via DXP pathway; isopentenyl diphosphate from 1-deoxy-D-xylulose 5-phosphate: step 3/6. Catalyzes the phosphorylation of the position 2 hydroxy group of 4-diphosphocytidyl-2C-methyl-D-erythritol. This is 4-diphosphocytidyl-2-C-methyl-D-erythritol kinase from Prochlorococcus marinus (strain AS9601).